Here is a 710-residue protein sequence, read N- to C-terminus: Pentatricopeptide repeat-containing protein At3g14330 (710 aa).

10 PPR repeats span residues 166-196 (NPKL…VTDS), 200-234 (TEKV…FIEP), 235-269 (GNFS…KEKV), 270-304 (DQVV…NVVT), 305-331 (WNSL…MQEE), 336-370 (SWAT…KEKP), 371-401 (DVPL…MLTK), 402-436 (DLAS…GVAP), 437-467 (DGIT…MKTE), and 473-503 (ALEH…MPFK). The interval 508-583 (IWGSLLNSCR…EAGCSWVQVK (76 aa)) is type E motif. The tract at residues 584 to 615 (DKIQIFVAGGGYEFRNSDEYKKVWTELQEAIE) is type E(+) motif. Residues 616–710 (KSGYSPNTSV…DGICSCKDYW (95 aa)) are type DYW motif.

The protein belongs to the PPR family. PCMP-H subfamily.

The protein is Pentatricopeptide repeat-containing protein At3g14330 (PCMP-H57) of Arabidopsis thaliana (Mouse-ear cress).